A 620-amino-acid chain; its full sequence is Cryptochrome-1 (620 aa).

The region spanning 3–132 is the Photolyase/cryptochrome alpha/beta domain; sequence VNAVHWFRKG…EVIVRISHTL (130 aa). 3 short sequence motifs (LIR) span residues 50-54, 82-87, and 151-156; these read NRWRF, DVFPRL, and KRFQTL. Ser252 provides a ligand contact to FAD. 4 consecutive short sequence motifs (LIR) follow at residues 255–260, 271–276, 285–290, and 335–339; these read LRFGCL, DLYKKV, SLYGQL, and TGFPW. Gln289 serves as a coordination point for FAD. His355 serves as a coordination point for FAD. An LIR 8 motif is present at residues 379–384; it reads KVFEEL. 387-389 is a binding site for FAD; it reads DAD. Short sequence motifs (LIR) lie at residues 395–400, 411–416, 430–435, 486–491, and 492–497; these read GSWMWL, HCYCPV, RRYLPV, QIYQQL, and SRYRGL. Positions 593 to 620 are disordered; that stretch reads TGISAGKRPNPEEETQSVGPKVQRQSTN.

This sequence belongs to the DNA photolyase class-1 family. As to quaternary structure, component of the circadian core oscillator, which includes the CRY proteins, CLOCK or NPAS2, BMAL1 or BMAL2, CSNK1E, and the PER proteins. FAD is required as a cofactor. Requires (6R)-5,10-methylene-5,6,7,8-tetrahydrofolate as cofactor. In terms of tissue distribution, expressed in the retina.

It is found in the cytoplasm. The protein localises to the nucleus. Transcriptional repressor which forms a core component of the circadian clock. The circadian clock, an internal time-keeping system, regulates various physiological processes through the generation of approximately 24 hour circadian rhythms in gene expression, which are translated into rhythms in metabolism and behavior. It is derived from the Latin roots 'circa' (about) and 'diem' (day) and acts as an important regulator of a wide array of physiological functions including metabolism, sleep, body temperature, blood pressure, endocrine, immune, cardiovascular, and renal function. Consists of two major components: the central clock, residing in the suprachiasmatic nucleus (SCN) of the brain, and the peripheral clocks that are present in nearly every tissue and organ system. Both the central and peripheral clocks can be reset by environmental cues, also known as Zeitgebers (German for 'timegivers'). The predominant Zeitgeber for the central clock is light, which is sensed by retina and signals directly to the SCN. The central clock entrains the peripheral clocks through neuronal and hormonal signals, body temperature and feeding-related cues, aligning all clocks with the external light/dark cycle. Circadian rhythms allow an organism to achieve temporal homeostasis with its environment at the molecular level by regulating gene expression to create a peak of protein expression once every 24 hours to control when a particular physiological process is most active with respect to the solar day. Transcription and translation of core clock components (CLOCK, NPAS2, BMAL1, BMAL2, PER1, PER2, PER3, CRY1 and CRY2) plays a critical role in rhythm generation, whereas delays imposed by post-translational modifications (PTMs) are important for determining the period (tau) of the rhythms (tau refers to the period of a rhythm and is the length, in time, of one complete cycle). A diurnal rhythm is synchronized with the day/night cycle, while the ultradian and infradian rhythms have a period shorter and longer than 24 hours, respectively. Disruptions in the circadian rhythms contribute to the pathology of cardiovascular diseases, cancer, metabolic syndromes and aging. A transcription/translation feedback loop (TTFL) forms the core of the molecular circadian clock mechanism. Transcription factors, CLOCK or NPAS2 and BMAL1 or BMAL2, form the positive limb of the feedback loop, act in the form of a heterodimer and activate the transcription of core clock genes and clock-controlled genes (involved in key metabolic processes), harboring E-box elements (5'-CACGTG-3') within their promoters. The core clock genes: PER1/2/3 and CRY1/2 which are transcriptional repressors form the negative limb of the feedback loop and interact with the CLOCK|NPAS2-BMAL1|BMAL2 heterodimer inhibiting its activity and thereby negatively regulating their own expression. This heterodimer also activates nuclear receptors NR1D1/2 and RORA/B/G, which form a second feedback loop and which activate and repress BMAL1 transcription, respectively. CRY1 and CRY2 have redundant functions but also differential and selective contributions at least in defining the pace of the SCN circadian clock and its circadian transcriptional outputs. More potent transcriptional repressor in cerebellum and liver than CRY2, though more effective in lengthening the period of the SCN oscillator. On its side, CRY2 seems to play a critical role in tuning SCN circadian period by opposing the action of CRY1. With CRY2, is dispensable for circadian rhythm generation but necessary for the development of intercellular networks for rhythm synchrony. Capable of translocating circadian clock core proteins such as PER proteins to the nucleus. Interacts with CLOCK-BMAL1 independently of PER proteins and is found at CLOCK-BMAL1-bound sites, suggesting that CRY may act as a molecular gatekeeper to maintain CLOCK-BMAL1 in a poised and repressed state until the proper time for transcriptional activation. This chain is Cryptochrome-1 (CRY1), found in Erithacus rubecula (European robin).